The primary structure comprises 231 residues: Large ribosomal subunit protein uL1 (231 aa).

This sequence belongs to the universal ribosomal protein uL1 family. As to quaternary structure, part of the 50S ribosomal subunit.

In terms of biological role, binds directly to 23S rRNA. The L1 stalk is quite mobile in the ribosome, and is involved in E site tRNA release. Protein L1 is also a translational repressor protein, it controls the translation of the L11 operon by binding to its mRNA. The polypeptide is Large ribosomal subunit protein uL1 (Carboxydothermus hydrogenoformans (strain ATCC BAA-161 / DSM 6008 / Z-2901)).